Here is a 134-residue protein sequence, read N- to C-terminus: Protein YhfA (134 aa).

The protein is Protein YhfA (yhfA) of Escherichia coli O157:H7.